The chain runs to 504 residues: Maturase K (504 aa).

It belongs to the intron maturase 2 family. MatK subfamily.

The protein localises to the plastid. The protein resides in the chloroplast. In terms of biological role, usually encoded in the trnK tRNA gene intron. Probably assists in splicing its own and other chloroplast group II introns. The chain is Maturase K from Taxus baccata (English yew).